The following is a 344-amino-acid chain: 4-hydroxy-3-methylbut-2-en-1-yl diphosphate synthase (flavodoxin) (344 aa).

C253, C256, C288, and E295 together coordinate [4Fe-4S] cluster.

It belongs to the IspG family. [4Fe-4S] cluster is required as a cofactor.

It catalyses the reaction (2E)-4-hydroxy-3-methylbut-2-enyl diphosphate + oxidized [flavodoxin] + H2O + 2 H(+) = 2-C-methyl-D-erythritol 2,4-cyclic diphosphate + reduced [flavodoxin]. Its pathway is isoprenoid biosynthesis; isopentenyl diphosphate biosynthesis via DXP pathway; isopentenyl diphosphate from 1-deoxy-D-xylulose 5-phosphate: step 5/6. Converts 2C-methyl-D-erythritol 2,4-cyclodiphosphate (ME-2,4cPP) into 1-hydroxy-2-methyl-2-(E)-butenyl 4-diphosphate. This Thermotoga maritima (strain ATCC 43589 / DSM 3109 / JCM 10099 / NBRC 100826 / MSB8) protein is 4-hydroxy-3-methylbut-2-en-1-yl diphosphate synthase (flavodoxin).